The following is a 230-amino-acid chain: 5'-methylthioadenosine/S-adenosylhomocysteine nucleosidase (230 aa).

The Proton acceptor role is filled by Glu12. Substrate contacts are provided by residues Gly78, Ile152, and 173–174 (ME). Asp197 acts as the Proton donor in catalysis.

The protein belongs to the PNP/UDP phosphorylase family. MtnN subfamily.

It carries out the reaction S-adenosyl-L-homocysteine + H2O = S-(5-deoxy-D-ribos-5-yl)-L-homocysteine + adenine. The catalysed reaction is S-methyl-5'-thioadenosine + H2O = 5-(methylsulfanyl)-D-ribose + adenine. It catalyses the reaction 5'-deoxyadenosine + H2O = 5-deoxy-D-ribose + adenine. The protein operates within amino-acid biosynthesis; L-methionine biosynthesis via salvage pathway; S-methyl-5-thio-alpha-D-ribose 1-phosphate from S-methyl-5'-thioadenosine (hydrolase route): step 1/2. In terms of biological role, catalyzes the irreversible cleavage of the glycosidic bond in both 5'-methylthioadenosine (MTA) and S-adenosylhomocysteine (SAH/AdoHcy) to adenine and the corresponding thioribose, 5'-methylthioribose and S-ribosylhomocysteine, respectively. Also cleaves 5'-deoxyadenosine, a toxic by-product of radical S-adenosylmethionine (SAM) enzymes, into 5-deoxyribose and adenine. The chain is 5'-methylthioadenosine/S-adenosylhomocysteine nucleosidase from Haemophilus influenzae (strain 86-028NP).